The primary structure comprises 428 residues: Secernin-2 (428 aa).

The active site involves cysteine 10.

The protein belongs to the peptidase C69 family. Secernin subfamily.

The protein is Secernin-2 (scrn2) of Xenopus laevis (African clawed frog).